Consider the following 914-residue polypeptide: Beta-mannosidase A (914 aa).

An N-terminal signal peptide occupies residues 1-20 (MRFTATAAALVASSIPATLG). N-linked (GlcNAc...) asparagine glycosylation is found at asparagine 39, asparagine 79, asparagine 230, asparagine 265, asparagine 299, asparagine 309, and asparagine 330. The active-site Proton donor is glutamate 462. Asparagine 591, asparagine 614, asparagine 641, asparagine 721, asparagine 744, asparagine 773, asparagine 784, and asparagine 909 each carry an N-linked (GlcNAc...) asparagine glycan.

The protein belongs to the glycosyl hydrolase 2 family. Beta-mannosidase A subfamily. As to quaternary structure, homodimer.

The protein localises to the secreted. It catalyses the reaction Hydrolysis of terminal, non-reducing beta-D-mannose residues in beta-D-mannosides.. The protein operates within glycan metabolism; N-glycan degradation. Exoglycosidase that cleaves the single beta-linked mannose residue from the non-reducing end of beta-mannosidic oligosaccharides of various complexity and length. Involved in the degradation of polymeric mannan and galactomannan. This Aspergillus flavus (strain ATCC 200026 / FGSC A1120 / IAM 13836 / NRRL 3357 / JCM 12722 / SRRC 167) protein is Beta-mannosidase A (mndA).